The primary structure comprises 819 residues: Pentatricopeptide repeat-containing protein At5g02860 (819 aa).

The disordered stretch occupies residues 57-93; sequence QNPNSRQPISSQTSRNRNRTRIGKSRDPNLGKPWSYH. 18 PPR repeats span residues 172–206, 207–241, 242–277, 278–312, 313–347, 348–382, 383–417, 418–452, 453–487, 488–522, 523–557, 558–592, 593–627, 628–662, 663–697, 698–732, 733–767, and 768–802; these read DNSV…GFSL, DVYS…GCKP, TLIT…GIAP, DAYT…GFSY, DKVT…GFSP, SIVT…GTKP, DVFT…GCKP, NICT…GLSP, DIVT…GFVP, ERET…GVTP, DLST…RCKP, NELT…VIEP, RAVL…GFSP, DITT…GFTP, SMAT…GIKP, DIIS…GIVP, DVIT…GCRP, and NQNT…DPHA.

This sequence belongs to the PPR family. P subfamily.

In Arabidopsis thaliana (Mouse-ear cress), this protein is Pentatricopeptide repeat-containing protein At5g02860.